We begin with the raw amino-acid sequence, 659 residues long: UvrABC system protein B (659 aa).

Residues 25-182 (QSIENGNRGQ…KKLIEIQYER (158 aa)) enclose the Helicase ATP-binding domain. 38 to 45 (GVTGSGKT) provides a ligand contact to ATP. The Beta-hairpin signature appears at 91–114 (YYDYYQPEAYVPQTDTFIEKDASI). A Helicase C-terminal domain is found at 429–582 (QIDDLYGEIQ…QMEYNEEHNI (154 aa)). The region spanning 622-657 (EKLIEQYEEEMKEAAKNLQFERAAELRDIIKDLKEN) is the UVR domain.

Belongs to the UvrB family. Forms a heterotetramer with UvrA during the search for lesions. Interacts with UvrC in an incision complex.

The protein localises to the cytoplasm. Its function is as follows. The UvrABC repair system catalyzes the recognition and processing of DNA lesions. A damage recognition complex composed of 2 UvrA and 2 UvrB subunits scans DNA for abnormalities. Upon binding of the UvrA(2)B(2) complex to a putative damaged site, the DNA wraps around one UvrB monomer. DNA wrap is dependent on ATP binding by UvrB and probably causes local melting of the DNA helix, facilitating insertion of UvrB beta-hairpin between the DNA strands. Then UvrB probes one DNA strand for the presence of a lesion. If a lesion is found the UvrA subunits dissociate and the UvrB-DNA preincision complex is formed. This complex is subsequently bound by UvrC and the second UvrB is released. If no lesion is found, the DNA wraps around the other UvrB subunit that will check the other stand for damage. This Clostridium perfringens (strain SM101 / Type A) protein is UvrABC system protein B.